Consider the following 203-residue polypeptide: Superoxide dismutase [Mn] (203 aa).

His-27, His-81, Asp-164, and His-168 together coordinate Mn(2+).

Belongs to the iron/manganese superoxide dismutase family. As to quaternary structure, homodimer. Mn(2+) is required as a cofactor.

The catalysed reaction is 2 superoxide + 2 H(+) = H2O2 + O2. Destroys superoxide anion radicals which are normally produced within the cells and which are toxic to biological systems. Partially complements double sodA-sodB deletions in E.coli. The protein is Superoxide dismutase [Mn] of Pseudomonas aeruginosa (strain ATCC 15692 / DSM 22644 / CIP 104116 / JCM 14847 / LMG 12228 / 1C / PRS 101 / PAO1).